Here is a 338-residue protein sequence, read N- to C-terminus: Tetraacyldisaccharide 4'-kinase (338 aa).

Residue 53 to 60 participates in ATP binding; it reads VAGGAGKT.

Belongs to the LpxK family.

The catalysed reaction is a lipid A disaccharide + ATP = a lipid IVA + ADP + H(+). It participates in glycolipid biosynthesis; lipid IV(A) biosynthesis; lipid IV(A) from (3R)-3-hydroxytetradecanoyl-[acyl-carrier-protein] and UDP-N-acetyl-alpha-D-glucosamine: step 6/6. Transfers the gamma-phosphate of ATP to the 4'-position of a tetraacyldisaccharide 1-phosphate intermediate (termed DS-1-P) to form tetraacyldisaccharide 1,4'-bis-phosphate (lipid IVA). The chain is Tetraacyldisaccharide 4'-kinase from Polaromonas sp. (strain JS666 / ATCC BAA-500).